The sequence spans 760 residues: U-box domain-containing protein 3 (760 aa).

The stretch at 146-217 forms a coiled coil; the sequence is LMELMENALR…EQTEQLIELV (72 aa). Residues 237-311 form the U-box domain; sequence SIPPYFRCPL…ASWLEANRIN (75 aa). Positions 424-434 are enriched in polar residues; it reads ILGNHQSSSEM. Positions 424 to 448 are disordered; the sequence is ILGNHQSSSEMSPKKNLESSNNVNH. ARM repeat units lie at residues 504-543, 545-584, 586-626, 628-666, and 668-707; these read IENRVHIGRCGAITPLLSLLYSEEKLTQEHAVTALLNLSI, ELNKAMIVEVGAIEPLVHVLNTGNDRAKENSAASLFSLSV, QVNR…NLSI, HDNKARIVQAKAVKYLVELLDPDLEMVDKAVALLANLSA, and GEGRQAIVREGGIPLLVETVDLGSQRGKENAASVLLQLCL.

It carries out the reaction S-ubiquitinyl-[E2 ubiquitin-conjugating enzyme]-L-cysteine + [acceptor protein]-L-lysine = [E2 ubiquitin-conjugating enzyme]-L-cysteine + N(6)-ubiquitinyl-[acceptor protein]-L-lysine.. The protein operates within protein modification; protein ubiquitination. In terms of biological role, functions as an E3 ubiquitin ligase. In Arabidopsis thaliana (Mouse-ear cress), this protein is U-box domain-containing protein 3 (PUB3).